The sequence spans 298 residues: Glutamyl-Q tRNA(Asp) synthetase (298 aa).

L-glutamate is bound by residues 12–16 (RFAPT) and glutamate 48. Positions 15-25 (PTPSGYLHFGS) match the 'HIGH' region motif. The Zn(2+) site is built by cysteine 104, cysteine 106, tyrosine 118, and cysteine 122. The L-glutamate site is built by tyrosine 175 and arginine 193. A 'KMSKS' region motif is present at residues 231-235 (KLGKS). Lysine 234 contacts ATP.

The protein belongs to the class-I aminoacyl-tRNA synthetase family. GluQ subfamily. Zn(2+) serves as cofactor.

Catalyzes the tRNA-independent activation of glutamate in presence of ATP and the subsequent transfer of glutamate onto a tRNA(Asp). Glutamate is transferred on the 2-amino-5-(4,5-dihydroxy-2-cyclopenten-1-yl) moiety of the queuosine in the wobble position of the QUC anticodon. The sequence is that of Glutamyl-Q tRNA(Asp) synthetase from Pseudomonas fluorescens (strain ATCC BAA-477 / NRRL B-23932 / Pf-5).